We begin with the raw amino-acid sequence, 284 residues long: Rubber cis-polyprenyltransferase HRT2 (284 aa).

The active site involves D41.

It belongs to the UPP synthase family. As to expression, predominantly expressed in latex.

The catalysed reaction is (cis-prenyl)(n)-diphosphate + isopentenyl diphosphate = (cis-prenyl)(n+1)-diphosphate + diphosphate. Its function is as follows. Proposed to be involved in rubber biosynthesis as a particle-bound rubber transferase responsible for the cis-1,4-polymerization of isoprene subunits. Probably requires additional factors for the production of high molecular mass rubber. In Hevea brasiliensis (Para rubber tree), this protein is Rubber cis-polyprenyltransferase HRT2 (HRT2).